Reading from the N-terminus, the 267-residue chain is Interleukin-15 receptor subunit alpha (267 aa).

The first 30 residues, 1–30 (MAPRRARGCRTLGLPALLLLLLLRPPATRG), serve as a signal peptide directing secretion. One can recognise a Sushi domain in the interval 31-95 (ITCPPPMSVE…WTTPSLKCIR (65 aa)). Over 31 to 205 (ITCPPPMSVE…VYPQGHSDTT (175 aa)) the chain is Extracellular. 2 disulfides stabilise this stretch: Cys33–Cys75 and Cys59–Cys93. A disordered region spans residues 102–178 (QRPAPPSTVT…ESSHGTPSQT (77 aa)). Positions 108–124 (STVTTAGVTPQPESLSP) are enriched in polar residues. A compositionally biased stretch (low complexity) spans 129–145 (PAASSPSSNNTAATTAA). Asn137 carries an N-linked (GlcNAc...) asparagine glycan. Positions 152-165 (LMPSKSPSTGTTEI) are enriched in polar residues. A helical membrane pass occupies residues 206-228 (VAISTSTVLLCGLSAVSLLACYL). Topologically, residues 229-267 (KSRQTPPLASVEMEAMEALPVTWGTSSRDEDLENCSHHL) are cytoplasmic.

As to quaternary structure, the interleukin-15 receptor IL15R is a heterotrimer of IL15RA, IL2RB and IL2RG. IL15RA also self-associates. Interacts with SYK. In terms of processing, N-glycosylated and O-glycosylated. Post-translationally, a soluble form (sIL-15RA) arises from proteolytic shedding of the membrane-anchored receptor. It also binds IL-15 and thus interferes with IL-15 binding to the membrane receptor. In terms of tissue distribution, expressed in neutrophils (at protein level). Expressed in fetal brain with higher expression in the hippocampus and cerebellum than in cortex and thalamus. Higher levels of soluble sIL-15RA form in comparison with membrane-bound forms is present in all brain structures. Isoforms 1, 3, 4, 5, 6, 7, 8 and 9: Widely expressed.

The protein localises to the membrane. It is found in the nucleus membrane. Its subcellular location is the cell surface. It localises to the endoplasmic reticulum membrane. The protein resides in the golgi apparatus membrane. The protein localises to the cytoplasmic vesicle membrane. It is found in the secreted. Its subcellular location is the extracellular space. In terms of biological role, high-affinity receptor for interleukin-15. Can signal both in cis and trans where IL15R from one subset of cells presents IL15 to neighboring IL2RG-expressing cells. In neutrophils, binds and activates kinase SYK in response to IL15 stimulation. In neutrophils, required for IL15-induced phagocytosis in a SYK-dependent manner. Expression of different isoforms may alter or interfere with signal transduction. Its function is as follows. Does not bind IL15. The polypeptide is Interleukin-15 receptor subunit alpha (IL15RA) (Homo sapiens (Human)).